A 570-amino-acid chain; its full sequence is Molecular chaperone MKKS (570 aa).

192–199 is an ATP binding site; that stretch reads GHIILGKS. The substrate-binding apical domain stretch occupies residues 198 to 370; that stretch reads KSLIVPLKGQ…FHLIPNEATI (173 aa).

It belongs to the TCP-1 chaperonin family. As to quaternary structure, component of a complex composed at least of MKKS, BBS10, BBS12, TCP1, CCT2, CCT3, CCT4, CCT5 and CCT8. Interacts with STUB1. Interacts with BBS2 (via coiled coil domain). Interacts with CCDC28B. Interacts with BBS12. Interacts with SMARCC1, a component of the SWI/SNF complexes; the interaction takes place predominantly in the cytoplasm and may modulate SMARCC1 location. Interacts with DLEC1. As to expression, widely expressed in adult and fetal tissues.

Its subcellular location is the cytoplasm. The protein localises to the cytoskeleton. It is found in the microtubule organizing center. The protein resides in the centrosome. It localises to the cytosol. Its subcellular location is the nucleus. Its function is as follows. Probable molecular chaperone that assists the folding of proteins upon ATP hydrolysis. Plays a role in the assembly of BBSome, a complex involved in ciliogenesis regulating transports vesicles to the cilia. May play a role in protein processing in limb, cardiac and reproductive system development. May play a role in cytokinesis. The protein is Molecular chaperone MKKS of Homo sapiens (Human).